We begin with the raw amino-acid sequence, 769 residues long: Cullin-3 (769 aa).

The interval 614-655 (DRELPSTTSSTTTTTTTATSSSTSTSPSSSSSSISTPTPSKS) is disordered. Low complexity predominate over residues 618–653 (PSTTSSTTTTTTTATSSSTSTSPSSSSSSISTPTPS). In terms of domain architecture, Cullin neddylation spans 699–761 (DRKHQIEASI…REYLERSKQD (63 aa)). Residue Lys-713 forms a Glycyl lysine isopeptide (Lys-Gly) (interchain with G-Cter in NEDD8) linkage.

The protein belongs to the cullin family. In terms of processing, neddylated. Deneddylated via its interaction with the COP9 signalosome (CSN) complex.

Its subcellular location is the nucleus. It participates in protein modification; protein ubiquitination. Functionally, probable core component of cullin-based SCF-like E3 ubiquitin-protein ligase complexes which mediate the ubiquitination and subsequent proteasomal degradation of target proteins. The E3 ubiquitin-protein ligase activity of the complex is dependent on the neddylation of the cullin subunit. This Dictyostelium discoideum (Social amoeba) protein is Cullin-3 (culC).